Here is a 422-residue protein sequence, read N- to C-terminus: Adenylosuccinate synthetase (422 aa).

Residues 11-17 (GDEGKGK) and 39-41 (GHT) each bind GTP. Catalysis depends on D12, which acts as the Proton acceptor. Residues D12 and G39 each contribute to the Mg(2+) site. Residues 12-15 (DEGK), 37-40 (NAGH), T129, R143, N219, T234, and R298 contribute to the IMP site. H40 functions as the Proton donor in the catalytic mechanism. 294–300 (VTTGRRR) lines the substrate pocket. GTP is bound by residues R300, 326–328 (KLD), and 409–411 (GTG).

Belongs to the adenylosuccinate synthetase family. As to quaternary structure, homodimer. Mg(2+) serves as cofactor.

The protein localises to the cytoplasm. The catalysed reaction is IMP + L-aspartate + GTP = N(6)-(1,2-dicarboxyethyl)-AMP + GDP + phosphate + 2 H(+). The protein operates within purine metabolism; AMP biosynthesis via de novo pathway; AMP from IMP: step 1/2. Functionally, plays an important role in the de novo pathway and in the salvage pathway of purine nucleotide biosynthesis. Catalyzes the first committed step in the biosynthesis of AMP from IMP. The chain is Adenylosuccinate synthetase from Ajellomyces capsulatus (strain NAm1 / WU24) (Darling's disease fungus).